The following is a 494-amino-acid chain: Guanosine-5'-triphosphate,3'-diphosphate pyrophosphatase (494 aa).

Belongs to the GppA/Ppx family. GppA subfamily.

The catalysed reaction is guanosine 3'-diphosphate 5'-triphosphate + H2O = guanosine 3',5'-bis(diphosphate) + phosphate + H(+). The protein operates within purine metabolism; ppGpp biosynthesis; ppGpp from GTP: step 2/2. Functionally, catalyzes the conversion of pppGpp to ppGpp. Guanosine pentaphosphate (pppGpp) is a cytoplasmic signaling molecule which together with ppGpp controls the 'stringent response', an adaptive process that allows bacteria to respond to amino acid starvation, resulting in the coordinated regulation of numerous cellular activities. The sequence is that of Guanosine-5'-triphosphate,3'-diphosphate pyrophosphatase from Escherichia coli (strain 55989 / EAEC).